The sequence spans 148 residues: 3-dehydroquinate dehydratase (148 aa).

Y26 serves as the catalytic Proton acceptor. Substrate-binding residues include N75, H81, and D88. The Proton donor role is filled by H101. Residues 102-103 and R112 contribute to the substrate site; that span reads LS.

This sequence belongs to the type-II 3-dehydroquinase family. As to quaternary structure, homododecamer.

It catalyses the reaction 3-dehydroquinate = 3-dehydroshikimate + H2O. Its pathway is metabolic intermediate biosynthesis; chorismate biosynthesis; chorismate from D-erythrose 4-phosphate and phosphoenolpyruvate: step 3/7. In terms of biological role, catalyzes a trans-dehydration via an enolate intermediate. The chain is 3-dehydroquinate dehydratase from Shewanella frigidimarina (strain NCIMB 400).